The chain runs to 600 residues: Elongation factor 4 (600 aa).

The tr-type G domain occupies Lys6 to Lys188. GTP contacts are provided by residues Asp18–Thr23 and Asn135–Asp138.

Belongs to the TRAFAC class translation factor GTPase superfamily. Classic translation factor GTPase family. LepA subfamily.

It is found in the cell inner membrane. The catalysed reaction is GTP + H2O = GDP + phosphate + H(+). Its function is as follows. Required for accurate and efficient protein synthesis under certain stress conditions. May act as a fidelity factor of the translation reaction, by catalyzing a one-codon backward translocation of tRNAs on improperly translocated ribosomes. Back-translocation proceeds from a post-translocation (POST) complex to a pre-translocation (PRE) complex, thus giving elongation factor G a second chance to translocate the tRNAs correctly. Binds to ribosomes in a GTP-dependent manner. The sequence is that of Elongation factor 4 from Sorangium cellulosum (strain So ce56) (Polyangium cellulosum (strain So ce56)).